The following is a 235-amino-acid chain: 7-cyano-7-deazaguanine synthase (235 aa).

8 to 18 (FSGGQDSTTCL) serves as a coordination point for ATP. The Zn(2+) site is built by Cys187, Cys196, Cys199, and Cys202.

This sequence belongs to the QueC family. Zn(2+) is required as a cofactor.

It carries out the reaction 7-carboxy-7-deazaguanine + NH4(+) + ATP = 7-cyano-7-deazaguanine + ADP + phosphate + H2O + H(+). The protein operates within purine metabolism; 7-cyano-7-deazaguanine biosynthesis. Functionally, catalyzes the ATP-dependent conversion of 7-carboxy-7-deazaguanine (CDG) to 7-cyano-7-deazaguanine (preQ(0)). This is 7-cyano-7-deazaguanine synthase from Aeromonas hydrophila subsp. hydrophila (strain ATCC 7966 / DSM 30187 / BCRC 13018 / CCUG 14551 / JCM 1027 / KCTC 2358 / NCIMB 9240 / NCTC 8049).